The following is a 458-amino-acid chain: 3-isopropylmalate dehydratase large subunit (458 aa).

Residues C339, C399, and C402 each coordinate [4Fe-4S] cluster.

Belongs to the aconitase/IPM isomerase family. LeuC type 1 subfamily. As to quaternary structure, heterodimer of LeuC and LeuD. Requires [4Fe-4S] cluster as cofactor.

The enzyme catalyses (2R,3S)-3-isopropylmalate = (2S)-2-isopropylmalate. Its pathway is amino-acid biosynthesis; L-leucine biosynthesis; L-leucine from 3-methyl-2-oxobutanoate: step 2/4. Its function is as follows. Catalyzes the isomerization between 2-isopropylmalate and 3-isopropylmalate, via the formation of 2-isopropylmaleate. The chain is 3-isopropylmalate dehydratase large subunit from Lactococcus lactis subsp. cremoris (strain MG1363).